The following is a 386-amino-acid chain: ADP,ATP carrier protein, mitochondrial (386 aa).

The transit peptide at 1–77 (MADMNQHPTV…SNASPVFVQA (77 aa)) directs the protein to the mitochondrion. Solcar repeat units lie at residues 84–177 (AAFA…FKRL), 189–281 (KWFA…LKPV), and 289–375 (DSFF…LQVL). 5 helical membrane passes run 86–113 (FATD…VKLL), 154–178 (TANV…KRLF), 187–207 (YWKW…SSLF), 257–278 (FNIS…YDSL), and 292–312 (FASF…SYPI). ADP is bound by residues R159 and K171. Residue R316 coordinates ADP. Residues 316–321 (RRRMMM) are important for transport activity. The short motif at 316 to 321 (RRRMMM) is the Nucleotide carrier signature motif element. The chain crosses the membrane as a helical span at residues 352–372 (AGANILRAVAGAGVLAGYDKL).

Belongs to the mitochondrial carrier (TC 2.A.29) family. As to quaternary structure, monomer.

The protein localises to the mitochondrion inner membrane. It catalyses the reaction ADP(in) + ATP(out) = ADP(out) + ATP(in). Its activity is regulated as follows. The matrix-open state (m-state) is inhibited by the membrane-permeable bongkrekic acid (BKA). The cytoplasmic-open state (c-state) is inhibited by the membrane-impermeable toxic inhibitor carboxyatractyloside (CATR). Its function is as follows. ADP:ATP antiporter that mediates import of ADP into the mitochondrial matrix for ATP synthesis, and export of ATP out to fuel the cell. Cycles between the cytoplasmic-open state (c-state) and the matrix-open state (m-state): operates by the alternating access mechanism with a single substrate-binding site intermittently exposed to either the cytosolic (c-state) or matrix (m-state) side of the inner mitochondrial membrane. The sequence is that of ADP,ATP carrier protein, mitochondrial (ANT) from Solanum tuberosum (Potato).